Here is a 295-residue protein sequence, read N- to C-terminus: Alpha-1A adrenergic receptor (295 aa).

Over 1–27 (MVFLSGNASDSSNCTHPPAPVNISKAI) the chain is Extracellular. N-linked (GlcNAc...) asparagine glycans are attached at residues asparagine 7, asparagine 13, and asparagine 22. A helical transmembrane segment spans residues 28–51 (LLGVILGGLIIFGVLGNILVILSV). Residues 52–64 (ACHRHLHSVTHYY) are Cytoplasmic-facing. The chain crosses the membrane as a helical span at residues 65–88 (IVNLAVADLLLTSTVLPFSAIFEI). Topologically, residues 89–99 (LGYWAFGRVFC) are extracellular. The cysteines at positions 99 and 176 are disulfide-linked. The helical transmembrane segment at 100–122 (NIWAAVDVLCCTASIMGLCIISI) threads the bilayer. The Cytoplasmic portion of the chain corresponds to 123-143 (DRYIGVSYPLRYPTIVTQKRG). Residues 144–167 (LMALLCVWALSLVISIGPLFGWRQ) traverse the membrane as a helical segment. Over 168–181 (PAPEDETICQITEE) the chain is Extracellular. A helical transmembrane segment spans residues 182–205 (PGYVLFSALGSFYVPLTIILVMYC). Over 206-273 (RVYVVAKRES…FSREKKAAKT (68 aa)) the chain is Cytoplasmic. Serine 215 is modified (phosphoserine; by PKA). Residues 274–295 (LGIVVGCFVLCWLPFFLVMPIG) form a helical membrane-spanning segment.

This sequence belongs to the G-protein coupled receptor 1 family. Adrenergic receptor subfamily. ADRA1A sub-subfamily. Homo- and heterooligomer. Heterooligomerizes with ADRA1B homooligomers in cardiac myocytes. Interacts with CAVIN4.

The protein localises to the nucleus membrane. The protein resides in the cell membrane. It is found in the cytoplasm. Its subcellular location is the membrane. It localises to the caveola. Its function is as follows. This alpha-adrenergic receptor mediates its action by association with G proteins that activate a phosphatidylinositol-calcium second messenger system. Its effect is mediated by G(q) and G(11) proteins. Nuclear ADRA1A-ADRA1B heterooligomers regulate phenylephrine (PE)-stimulated ERK signaling in cardiac myocytes. In Canis lupus familiaris (Dog), this protein is Alpha-1A adrenergic receptor (ADRA1A).